The sequence spans 338 residues: Glyceraldehyde-3-phosphate dehydrogenase 2 (338 aa).

NAD(+)-binding positions include 13–14 and glycine 111; that span reads TI. Position 140-142 (140-142) interacts with D-glyceraldehyde 3-phosphate; that stretch reads SCN. The Nucleophile role is filled by cysteine 141. Residue arginine 169 participates in NAD(+) binding. 195–196 serves as a coordination point for D-glyceraldehyde 3-phosphate; that stretch reads HG. Glutamine 300 contributes to the NAD(+) binding site.

Belongs to the glyceraldehyde-3-phosphate dehydrogenase family. In terms of assembly, homotetramer.

Its subcellular location is the cytoplasm. It carries out the reaction D-glyceraldehyde 3-phosphate + phosphate + NADP(+) = (2R)-3-phospho-glyceroyl phosphate + NADPH + H(+). The catalysed reaction is D-glyceraldehyde 3-phosphate + phosphate + NAD(+) = (2R)-3-phospho-glyceroyl phosphate + NADH + H(+). It functions in the pathway carbohydrate degradation; glycolysis; pyruvate from D-glyceraldehyde 3-phosphate: step 1/5. The protein is Glyceraldehyde-3-phosphate dehydrogenase 2 of Methanosarcina barkeri (strain Fusaro / DSM 804).